The chain runs to 151 residues: Cytochrome c-type biogenesis protein CcmE (151 aa).

Residues 1 to 8 (MNPQRKKR) are Cytoplasmic-facing. Residues 9–29 (LLLIVGLLVGVGVAVGFALSA) traverse the membrane as a helical; Signal-anchor for type II membrane protein segment. Topologically, residues 30–151 (LQQNINLFYT…QAAAGGETKP (122 aa)) are periplasmic. Heme is bound by residues H124 and Y128.

It belongs to the CcmE/CycJ family.

Its subcellular location is the cell inner membrane. Functionally, heme chaperone required for the biogenesis of c-type cytochromes. Transiently binds heme delivered by CcmC and transfers the heme to apo-cytochromes in a process facilitated by CcmF and CcmH. This chain is Cytochrome c-type biogenesis protein CcmE, found in Pseudomonas putida (strain ATCC 700007 / DSM 6899 / JCM 31910 / BCRC 17059 / LMG 24140 / F1).